The primary structure comprises 625 residues: tRNA uridine 5-carboxymethylaminomethyl modification enzyme MnmG (625 aa).

Position 13–18 (13–18 (GGGHAG)) interacts with FAD. NAD(+) is bound at residue 273 to 287 (GPRYCPSIEDKVVRF).

It belongs to the MnmG family. Homodimer. Heterotetramer of two MnmE and two MnmG subunits. It depends on FAD as a cofactor.

It is found in the cytoplasm. NAD-binding protein involved in the addition of a carboxymethylaminomethyl (cmnm) group at the wobble position (U34) of certain tRNAs, forming tRNA-cmnm(5)s(2)U34. The chain is tRNA uridine 5-carboxymethylaminomethyl modification enzyme MnmG from Methylococcus capsulatus (strain ATCC 33009 / NCIMB 11132 / Bath).